We begin with the raw amino-acid sequence, 477 residues long: Tail sheath protein (477 aa).

The protein belongs to the myoviridae tail sheath protein family. Homomultimer.

It is found in the virion. The protein resides in the host cytoplasm. Functionally, polymerizes as an extended structure around the baseplate-tail tube complex. During ejection, the sheath shifts to a contracted form, thereby making the inner tail tube protrude through the host cell envelope. The sequence is that of Tail sheath protein from Burkholderia phage BcepMu (isolate -/United States/Summer/2002) (Bacteriophage BcepMu).